Consider the following 421-residue polypeptide: Probable sugar-binding periplasmic protein (421 aa).

An N-terminal signal peptide occupies residues 1–27; that stretch reads MHKLLKLAAMGTAACALLAGMAPVANA.

It belongs to the bacterial solute-binding protein 1 family.

It is found in the periplasm. Part of a binding-protein-dependent transport system for a sugar. The sequence is that of Probable sugar-binding periplasmic protein from Brucella melitensis biotype 1 (strain ATCC 23456 / CCUG 17765 / NCTC 10094 / 16M).